The chain runs to 356 residues: Histidinol-phosphate aminotransferase 1 (356 aa).

Lys210 carries the post-translational modification N6-(pyridoxal phosphate)lysine.

It belongs to the class-II pyridoxal-phosphate-dependent aminotransferase family. Histidinol-phosphate aminotransferase subfamily. As to quaternary structure, homodimer. It depends on pyridoxal 5'-phosphate as a cofactor.

It catalyses the reaction L-histidinol phosphate + 2-oxoglutarate = 3-(imidazol-4-yl)-2-oxopropyl phosphate + L-glutamate. The protein operates within amino-acid biosynthesis; L-histidine biosynthesis; L-histidine from 5-phospho-alpha-D-ribose 1-diphosphate: step 7/9. The protein is Histidinol-phosphate aminotransferase 1 of Hydrogenovibrio crunogenus (strain DSM 25203 / XCL-2) (Thiomicrospira crunogena).